The sequence spans 467 residues: Probable protein phosphatase 2C 55 (467 aa).

One can recognise a PPM-type phosphatase domain in the interval 222 to 458 (SCYLPHPDKE…DDITVVVSYV (237 aa)). D252, G253, D383, and D449 together coordinate Mn(2+).

Belongs to the PP2C family. Mg(2+) serves as cofactor. The cofactor is Mn(2+).

It carries out the reaction O-phospho-L-seryl-[protein] + H2O = L-seryl-[protein] + phosphate. The catalysed reaction is O-phospho-L-threonyl-[protein] + H2O = L-threonyl-[protein] + phosphate. This Arabidopsis thaliana (Mouse-ear cress) protein is Probable protein phosphatase 2C 55.